We begin with the raw amino-acid sequence, 184 residues long: NADH-quinone oxidoreductase subunit B (184 aa).

4 residues coordinate [4Fe-4S] cluster: cysteine 63, cysteine 64, cysteine 128, and cysteine 158.

Belongs to the complex I 20 kDa subunit family. NDH-1 is composed of 14 different subunits. Subunits NuoB, C, D, E, F, and G constitute the peripheral sector of the complex. [4Fe-4S] cluster serves as cofactor.

It is found in the cell inner membrane. It catalyses the reaction a quinone + NADH + 5 H(+)(in) = a quinol + NAD(+) + 4 H(+)(out). Functionally, NDH-1 shuttles electrons from NADH, via FMN and iron-sulfur (Fe-S) centers, to quinones in the respiratory chain. Couples the redox reaction to proton translocation (for every two electrons transferred, four hydrogen ions are translocated across the cytoplasmic membrane), and thus conserves the redox energy in a proton gradient. This Stenotrophomonas maltophilia (strain R551-3) protein is NADH-quinone oxidoreductase subunit B.